The primary structure comprises 95 residues: Integration host factor subunit beta (95 aa).

Belongs to the bacterial histone-like protein family. Heterodimer of an alpha and a beta chain.

This protein is one of the two subunits of integration host factor, a specific DNA-binding protein that functions in genetic recombination as well as in transcriptional and translational control. The sequence is that of Integration host factor subunit beta from Ruegeria sp. (strain TM1040) (Silicibacter sp.).